A 403-amino-acid chain; its full sequence is PP2A regulatory subunit TAP46 (403 aa).

Disordered stretches follow at residues 158 to 184 and 351 to 403; these read ERRG…LDDD and ANSS…TPCG. Composition is skewed to acidic residues over residues 174 to 184 and 366 to 375; these read ETEEDDVLDDD and EDDEEDDDDA. Residues 376–391 are compositionally biased toward basic and acidic residues; it reads AQDKARAWDDWKDDNP.

It belongs to the IGBP1/TAP42 family. Interacts with NPP4 and NPP5, two catalytic subunits (subunit C) of PP2A.

It localises to the cytoplasm. Its subcellular location is the nucleus. Functionally, involved in the regulation of the TOR signaling pathway. Seems to act as a regulator of PP2A catalytic activity. The protein is PP2A regulatory subunit TAP46 of Nicotiana benthamiana.